Reading from the N-terminus, the 130-residue chain is Small ribosomal subunit protein uS8 (130 aa).

The protein belongs to the universal ribosomal protein uS8 family. As to quaternary structure, part of the 30S ribosomal subunit.

Its function is as follows. One of the primary rRNA binding proteins, it binds directly to 16S rRNA central domain where it helps coordinate assembly of the platform of the 30S subunit. The polypeptide is Small ribosomal subunit protein uS8 (Halobacterium salinarum (strain ATCC 29341 / DSM 671 / R1)).